The following is a 95-amino-acid chain: Osteocalcin (95 aa).

A signal peptide spans 1–23 (MRTIFLLTLLTLAALCLSDLTDA). Residues 24-49 (KPSGPESDKAFMSKQEGNKVVNRLRR) constitute a propeptide that is removed on maturation. A Gla domain is found at 46-92 (RLRRYLGASVPSPDPLEPTREQCELNPACDELSDQYGLKTAYKRIYG). Residues Glu-62, Glu-66, Glu-69, and Asp-75 each coordinate Ca(2+). 4-carboxyglutamate is present on residues Glu-62, Glu-66, and Glu-69. A disulfide bridge connects residues Cys-68 and Cys-74.

It belongs to the osteocalcin/matrix Gla protein family. Gamma-carboxyglutamate residues are formed by vitamin K dependent carboxylation by GGCX. These residues are essential for the binding of calcium. Carboxylated in a Ptprv/Esp-dependent process. Decarboxylation promotes the hormone activity. Bone.

The protein localises to the secreted. Functionally, the carboxylated form is one of the main organic components of the bone matrix, which constitutes 1-2% of the total bone protein: it acts as a negative regulator of bone formation and is required to limit bone formation without impairing bone resorption or mineralization. The carboxylated form binds strongly to apatite and calcium. The uncarboxylated form acts as a hormone secreted by osteoblasts, which regulates different cellular processes, such as energy metabolism, male fertility and brain development. Regulates of energy metabolism by acting as a hormone favoring pancreatic beta-cell proliferation, insulin secretion and sensitivity and energy expenditure. Uncarboxylated osteocalcin hormone also promotes testosterone production in the testes: acts as a ligand for G protein-coupled receptor GPRC6A at the surface of Leydig cells, initiating a signaling response that promotes the expression of enzymes required for testosterone synthesis in a CREB-dependent manner. Also acts as a regulator of brain development: osteocalcin hormone crosses the blood-brain barrier and acts as a ligand for GPR158 on neurons, initiating a signaling response that prevents neuronal apoptosis in the hippocampus, favors the synthesis of all monoamine neurotransmitters and inhibits that of gamma-aminobutyric acid (GABA). Osteocalcin also crosses the placenta during pregnancy and maternal osteocalcin is required for fetal brain development. This Mus musculus (Mouse) protein is Osteocalcin.